The sequence spans 237 residues: DCN1-like protein 5 (237 aa).

Phosphoserine is present on residues serine 9, serine 41, and serine 48. In terms of domain architecture, DCUN1 spans 46 to 232 (FSSKKCLAWF…LLDEFVEWQK (187 aa)).

In terms of assembly, part of a complex that contains DCUN1D5, CUL1 and RBX1; this interaction is bridged by CUL1. Interacts (via the DCUN1 domain) with the unneddylated cullins: interacts with CUL1, CUL2, CUL3, CUL4A, CUL4B and CUL5; these interactions promote the cullin neddylation and the identity of the cullin dictates the affinity of the interaction. Interacts (via DCUN1 domain) with UBE2M (N-terminally acetylated form) and probably with UBE2F (N-terminally acetylated form). May also interact with regulators or subunits of cullin-RING ligases such as RBX1, RNF7, ELOB and DDB1; these interactions are bridged by cullins. Interacts with CAND1; this interaction is bridged by cullins and strongly inhibits the neddylation of cullins. These CAND-cullin-DCNL complexes can only be neddylated in the presence of a substrate adapter. In terms of processing, phosphorylation at Ser-41 is independent of cullin's interaction. Phosphorylated in response to both TICAM1 and MYD88 dependent Toll-like receptor (TLR) pathway activation. Phosphorylated in response to IL1B stimulation. Weakly expressed in testis, skin and immune tissues (thymus, spleen and lymph nodes).

It is found in the nucleus. Its subcellular location is the cytoplasm. The protein localises to the cytoskeleton. It localises to the spindle. In terms of biological role, contributes to the neddylation of all cullins by transferring NEDD8 from N-terminally acetylated NEDD8-conjugating E2s enzyme to different cullin C-terminal domain-RBX complexes which is necessary for the activation of cullin-RING E3 ubiquitin ligases (CRLs). May play a role in DNA damage response and may participate in cell proliferation and anchorage-independent cell growth. In Homo sapiens (Human), this protein is DCN1-like protein 5.